The sequence spans 341 residues: Guanine nucleotide-binding protein subunit beta (341 aa).

WD repeat units follow at residues 54–84 (GHLA…IVWD), 96–126 (LRSS…SIYS), 142–171 (GHTG…ALWN), 183–213 (GHTG…KLFD), 225–255 (GHES…RLFD), 269–299 (NIIC…NVWD), and 311–341 (GHDN…KIWN).

Belongs to the WD repeat G protein beta family. As to quaternary structure, g proteins are composed of 3 units, alpha, beta and gamma.

Guanine nucleotide-binding proteins (G proteins) are involved as a modulator or transducer in various transmembrane signaling systems. The beta and gamma chains are required for the GTPase activity, for replacement of GDP by GTP, and for G protein-effector interaction. This chain is Guanine nucleotide-binding protein subunit beta, found in Loligo forbesii (Veined squid).